A 593-amino-acid chain; its full sequence is DNA primase (593 aa).

The segment at 38-62 (CPFHQEKTPSFTVSDSKRFFYCFGC) adopts a CHC2-type zinc-finger fold. The Toprim domain occupies 250–332 (NRSILVEGYF…EKKISFIRLP (83 aa)). 3 residues coordinate Mg(2+): Glu256, Asp300, and Asp302.

The protein belongs to the DnaG primase family. In terms of assembly, monomer. Interacts with DnaB. Requires Zn(2+) as cofactor. Mg(2+) serves as cofactor.

It catalyses the reaction ssDNA + n NTP = ssDNA/pppN(pN)n-1 hybrid + (n-1) diphosphate.. Functionally, RNA polymerase that catalyzes the synthesis of short RNA molecules used as primers for DNA polymerase during DNA replication. This Rickettsia prowazekii (strain Madrid E) protein is DNA primase.